The following is a 112-amino-acid chain: uncharacterized protein (112 aa).

The next 2 helical transmembrane spans lie at 33–53 (IIGI…MIIF) and 69–89 (MNNI…HITV).

The protein localises to the membrane. This is an uncharacterized protein from Saccharomyces cerevisiae (strain ATCC 204508 / S288c) (Baker's yeast).